The chain runs to 572 residues: Mitochondrial chaperone TCM62 (572 aa).

The N-terminal 16 residues, 1-16 (MLRNCLRKLGNHQTKC), are a transit peptide targeting the mitochondrion. Topologically, residues 17–471 (SVKTLHTPIY…KANEPNFMTK (455 aa)) are mitochondrial matrix. The helical transmembrane segment at 472–488 (VGINAVLSAVILPSEVA) threads the bilayer. Residues 489 to 572 (FKNAYGYNYY…VYKKPERHKA (84 aa)) are Mitochondrial intermembrane-facing.

This sequence belongs to the chaperonin (HSP60) family. As to quaternary structure, forms a high molecular mass protein complex of approximately 850 kDa.

It is found in the mitochondrion inner membrane. In terms of biological role, chaperone. Required for the assembly of succinate dehydrogenase subunits. Ensures mitochondrial gene expression at elevated temperatures and prevents heat-aggregation of the ribosomal subunit VAR1. The polypeptide is Mitochondrial chaperone TCM62 (TCM62) (Saccharomyces cerevisiae (strain ATCC 204508 / S288c) (Baker's yeast)).